Consider the following 1124-residue polypeptide: Sodium/hydrogen exchanger 11 (1124 aa).

The next 11 membrane-spanning stretches (helical) occupy residues 25-45 (LVEE…GGLL), 52-72 (CEVI…HMAY), 90-110 (FSLY…DVEF), 120-140 (VLLT…YVVI), 179-199 (IYID…SIFF), 224-244 (DILG…CILA), 254-274 (IILC…LGMS), 305-325 (IFSS…IGCG), 335-355 (IPFI…TILL), 372-392 (GVVI…APDV), and 405-425 (MFIL…SYVM). N447 and N473 each carry an N-linked (GlcNAc...) asparagine glycan. Helical transmembrane passes span 612–632 (TGQI…WPMA), 641–661 (ISIN…KIII), 674–694 (LEFF…FVKL), and 706–726 (VIMG…IVPI). Positions 642-723 (SINYYFMFLY…IRFLPLFKII (82 aa)) are ion transport-like. 867–999 (IWLEGKDVLI…EYKIWLKLAL (133 aa)) provides a ligand contact to a nucleoside 3',5'-cyclic phosphate.

This sequence belongs to the monovalent cation:proton antiporter 1 (CPA1) transporter (TC 2.A.36) family.

It is found in the membrane. In terms of biological role, involved in pH regulation. The chain is Sodium/hydrogen exchanger 11 (SLC9C2) from Homo sapiens (Human).